The following is a 117-amino-acid chain: Large ribosomal subunit protein bL20 (117 aa).

It belongs to the bacterial ribosomal protein bL20 family.

Its function is as follows. Binds directly to 23S ribosomal RNA and is necessary for the in vitro assembly process of the 50S ribosomal subunit. It is not involved in the protein synthesizing functions of that subunit. The sequence is that of Large ribosomal subunit protein bL20 from Pelotomaculum thermopropionicum (strain DSM 13744 / JCM 10971 / SI).